The sequence spans 193 residues: uncharacterized protein (193 aa).

The interval M1–I144 is disordered. Low complexity predominate over residues N29 to N86. The segment covering K103–K118 has biased composition (polar residues). Over residues N119–N140 the composition is skewed to low complexity. The chain crosses the membrane as a helical span at residues Y158 to F180.

It is found in the membrane. This is an uncharacterized protein from Dictyostelium discoideum (Social amoeba).